Reading from the N-terminus, the 185-residue chain is uncharacterized protein (185 aa).

Residues 1 to 18 (MLLKLILILCFLVTLSLS) form the signal peptide. The tract at residues 30–185 (TQGPTIASGG…VQDCGEITGW (156 aa)) is disordered. Residues 86–101 (RAQEGGKKDTTKEQPK) show a composition bias toward basic and acidic residues. The span at 103–116 (NNNNKNLGRHSSSG) shows a compositional bias: low complexity. The span at 117–135 (SGSGSGSGCGVTGDTGTGS) shows a compositional bias: gly residues.

The protein resides in the secreted. This is an uncharacterized protein from Dictyostelium discoideum (Social amoeba).